We begin with the raw amino-acid sequence, 413 residues long: Imidazolonepropionase (413 aa).

Fe(3+)-binding residues include histidine 77 and histidine 79. Positions 77 and 79 each coordinate Zn(2+). Residues arginine 86, tyrosine 149, and histidine 182 each coordinate 4-imidazolone-5-propanoate. Tyrosine 149 is an N-formimidoyl-L-glutamate binding site. Residue histidine 247 participates in Fe(3+) binding. Residue histidine 247 participates in Zn(2+) binding. Position 250 (glutamine 250) interacts with 4-imidazolone-5-propanoate. Aspartate 322 contributes to the Fe(3+) binding site. Aspartate 322 is a binding site for Zn(2+). N-formimidoyl-L-glutamate contacts are provided by asparagine 324 and glycine 326. Position 327 (threonine 327) interacts with 4-imidazolone-5-propanoate.

This sequence belongs to the metallo-dependent hydrolases superfamily. HutI family. Requires Zn(2+) as cofactor. The cofactor is Fe(3+).

The protein localises to the cytoplasm. The enzyme catalyses 4-imidazolone-5-propanoate + H2O = N-formimidoyl-L-glutamate. The protein operates within amino-acid degradation; L-histidine degradation into L-glutamate; N-formimidoyl-L-glutamate from L-histidine: step 3/3. In terms of biological role, catalyzes the hydrolytic cleavage of the carbon-nitrogen bond in imidazolone-5-propanoate to yield N-formimidoyl-L-glutamate. It is the third step in the universal histidine degradation pathway. The sequence is that of Imidazolonepropionase from Chromobacterium violaceum (strain ATCC 12472 / DSM 30191 / JCM 1249 / CCUG 213 / NBRC 12614 / NCIMB 9131 / NCTC 9757 / MK).